Reading from the N-terminus, the 233-residue chain is Clathrin light chain (233 aa).

Residues 1–124 form a disordered region; that stretch reads MSEKFPPLED…EDRSEVVDQW (124 aa). A compositionally biased stretch (basic and acidic residues) spans 17–43; the sequence is PNDKKDDDTDFLKREAEILGDEFKTEQ. Thr49 carries the phosphothreonine modification. Ser52 is subject to Phosphoserine. Residues 56 to 67 are compositionally biased toward acidic residues; the sequence is DDDEIRDFEEQF. Polar residues predominate over residues 69 to 92; the sequence is DINSANGAVSSDQNGSATVSSGND. Over residues 112 to 124 the composition is skewed to basic and acidic residues; that stretch reads SVKEDRSEVVDQW. Residues 125–186 are a coiled coil; the sequence is KQRRAVEIHE…EAFLKKRDEF (62 aa). The tract at residues 144–204 is involved in binding clathrin heavy chain; sequence KELQDEAIKH…DRALQLINQD (61 aa).

The protein belongs to the clathrin light chain family. As to quaternary structure, clathrin coats are formed from molecules containing 3 heavy chains and 3 light chains. Interacts with the auxilin-like clathrin uncoating factor SWA2.

The protein localises to the cytoplasmic vesicle membrane. Its subcellular location is the membrane. It is found in the coated pit. Its function is as follows. Clathrin is the major protein of the polyhedral coat of coated pits and vesicles. In yeast, it is involved in the retention of proteins in an intracellular membrane compartment, presumably the trans-Golgi. The yeast light chain is important for cell growth. The light chain may help to properly orient the assembly/ disassembly of the clathrin coats. This Saccharomyces cerevisiae (strain ATCC 204508 / S288c) (Baker's yeast) protein is Clathrin light chain (CLC1).